The chain runs to 309 residues: Ecto-ADP-ribosyltransferase 5 (309 aa).

The signal sequence occupies residues 1–23 (MILEDLLMVLSCLSLHALWKVRA). C43 and C259 are disulfide-bonded. The 191-residue stretch at 63–253 (ALLRESWEAA…IVTLWSYDQT (191 aa)) folds into the TR mART core domain. NAD(+) is bound at residue Y100. A glycan (N-linked (GlcNAc...) asparagine) is linked at N102. NAD(+) is bound by residues R161 and Q181. R161 is a catalytic residue. S184 is a catalytic residue. N197 is a glycosylation site (N-linked (GlcNAc...) asparagine). S215 contacts NAD(+). Residue E222 is part of the active site.

The protein belongs to the Arg-specific ADP-ribosyltransferase family. As to expression, abundantly expressed in testis. Lower levels in cardiac and skeletal muscle.

It is found in the secreted. The protein localises to the membrane. It catalyses the reaction L-arginyl-[protein] + NAD(+) = N(omega)-(ADP-D-ribosyl)-L-arginyl-[protein] + nicotinamide + H(+). This is Ecto-ADP-ribosyltransferase 5 (Art5) from Mus musculus (Mouse).